The sequence spans 246 residues: LexA repressor (246 aa).

A disordered region spans residues Met-1–Arg-34. The segment at residues Met-52–Lys-72 is a DNA-binding region (H-T-H motif). Residues Ser-170 and Lys-207 each act as for autocatalytic cleavage activity in the active site.

The protein belongs to the peptidase S24 family. As to quaternary structure, homodimer.

It carries out the reaction Hydrolysis of Ala-|-Gly bond in repressor LexA.. Represses a number of genes involved in the response to DNA damage (SOS response), including recA and lexA. In the presence of single-stranded DNA, RecA interacts with LexA causing an autocatalytic cleavage which disrupts the DNA-binding part of LexA, leading to derepression of the SOS regulon and eventually DNA repair. The protein is LexA repressor of Nocardioides sp. (strain ATCC BAA-499 / JS614).